Consider the following 63-residue polypeptide: Cecropin-A1 (63 aa).

A signal peptide spans 1–23 (MKFYNIFVFVALILAITIGQSEA). Arginine amide is present on Arg62.

The protein belongs to the cecropin family.

It localises to the secreted. Functionally, cecropins have lytic and antibacterial activity against several Gram-positive and Gram-negative bacteria. In Drosophila mauritiana (Fruit fly), this protein is Cecropin-A1 (CecA1).